A 140-amino-acid polypeptide reads, in one-letter code: ATP synthase epsilon chain 1 (140 aa).

This sequence belongs to the ATPase epsilon chain family. As to quaternary structure, F-type ATPases have 2 components, CF(1) - the catalytic core - and CF(0) - the membrane proton channel. CF(1) has five subunits: alpha(3), beta(3), gamma(1), delta(1), epsilon(1). CF(0) has three main subunits: a, b and c.

Its subcellular location is the cell inner membrane. Functionally, produces ATP from ADP in the presence of a proton gradient across the membrane. The chain is ATP synthase epsilon chain 1 from Photobacterium profundum (strain SS9).